A 451-amino-acid chain; its full sequence is Exodeoxyribonuclease 7 large subunit (451 aa).

It belongs to the XseA family. Heterooligomer composed of large and small subunits.

It is found in the cytoplasm. The catalysed reaction is Exonucleolytic cleavage in either 5'- to 3'- or 3'- to 5'-direction to yield nucleoside 5'-phosphates.. In terms of biological role, bidirectionally degrades single-stranded DNA into large acid-insoluble oligonucleotides, which are then degraded further into small acid-soluble oligonucleotides. The protein is Exodeoxyribonuclease 7 large subunit of Thiobacillus denitrificans (strain ATCC 25259 / T1).